The chain runs to 440 residues: 23S rRNA (uracil(1939)-C(5))-methyltransferase RlmD (440 aa).

In terms of domain architecture, TRAM spans 10–68 (KALPTQAVEITIDNLDHHLTGVGRYQGKACFVEGVLPGEKVSVQITEQKKQYAHARLRQ). 4 residues coordinate [4Fe-4S] cluster: cysteine 81, cysteine 87, cysteine 90, and cysteine 169. The S-adenosyl-L-methionine site is built by glutamine 272, phenylalanine 301, asparagine 306, glutamate 322, aspartate 349, and aspartate 372. The Nucleophile role is filled by cysteine 398.

This sequence belongs to the class I-like SAM-binding methyltransferase superfamily. RNA M5U methyltransferase family. RlmD subfamily.

The catalysed reaction is uridine(1939) in 23S rRNA + S-adenosyl-L-methionine = 5-methyluridine(1939) in 23S rRNA + S-adenosyl-L-homocysteine + H(+). Its function is as follows. Catalyzes the formation of 5-methyl-uridine at position 1939 (m5U1939) in 23S rRNA. The polypeptide is 23S rRNA (uracil(1939)-C(5))-methyltransferase RlmD (Tolumonas auensis (strain DSM 9187 / NBRC 110442 / TA 4)).